The following is an 827-amino-acid chain: Leucine--tRNA ligase (827 aa).

Residues 46-56 carry the 'HIGH' region motif; it reads PYPSGRIHMGH. The 'KMSKS' region motif lies at 585 to 589; that stretch reads KMSKS. Residue Lys588 participates in ATP binding.

Belongs to the class-I aminoacyl-tRNA synthetase family.

It localises to the cytoplasm. It catalyses the reaction tRNA(Leu) + L-leucine + ATP = L-leucyl-tRNA(Leu) + AMP + diphosphate. The protein is Leucine--tRNA ligase of Desulfotalea psychrophila (strain LSv54 / DSM 12343).